The chain runs to 200 residues: TATA-box-binding protein 2 (200 aa).

A run of 2 repeats spans residues 25-101 (LQNI…ARII) and 115-192 (IQNI…YPVL).

It belongs to the TBP family. Belongs to the TFIID complex together with the TBP-associated factors (TAFs). Binds DNA as monomer.

The protein localises to the nucleus. Functionally, general transcription factor that functions at the core of the DNA-binding multiprotein factor TFIID. Binding of TFIID to the TATA box is the initial transcriptional step of the pre-initiation complex (PIC), playing a role in the activation of eukaryotic genes transcribed by RNA polymerase II. This chain is TATA-box-binding protein 2 (TBP2), found in Zea mays (Maize).